A 407-amino-acid polypeptide reads, in one-letter code: Tryptophan synthase beta chain (407 aa).

Positions 1 to 11 are enriched in polar residues; it reads MSTAPSQQHAS. The disordered stretch occupies residues 1–25; the sequence is MSTAPSQQHASAQVPDPRGRFGDFG. K100 is subject to N6-(pyridoxal phosphate)lysine.

Belongs to the TrpB family. As to quaternary structure, tetramer of two alpha and two beta chains. Requires pyridoxal 5'-phosphate as cofactor.

The enzyme catalyses (1S,2R)-1-C-(indol-3-yl)glycerol 3-phosphate + L-serine = D-glyceraldehyde 3-phosphate + L-tryptophan + H2O. Its pathway is amino-acid biosynthesis; L-tryptophan biosynthesis; L-tryptophan from chorismate: step 5/5. Its function is as follows. The beta subunit is responsible for the synthesis of L-tryptophan from indole and L-serine. In Rhodopirellula baltica (strain DSM 10527 / NCIMB 13988 / SH1), this protein is Tryptophan synthase beta chain.